Here is a 358-residue protein sequence, read N- to C-terminus: Methionine aminopeptidase 2 (358 aa).

His109 serves as a coordination point for substrate. A divalent metal cation-binding residues include Asp130, Asp141, and His210. His218 serves as a coordination point for substrate. A divalent metal cation-binding residues include Glu243 and Glu339.

The protein belongs to the peptidase M24A family. Methionine aminopeptidase eukaryotic type 2 subfamily. The cofactor is Co(2+). It depends on Zn(2+) as a cofactor. Requires Mn(2+) as cofactor. Fe(2+) is required as a cofactor.

It is found in the cytoplasm. It catalyses the reaction Release of N-terminal amino acids, preferentially methionine, from peptides and arylamides.. Its function is as follows. Cotranslationally removes the N-terminal methionine from nascent proteins. The N-terminal methionine is often cleaved when the second residue in the primary sequence is small and uncharged (Met-Ala-, Cys, Gly, Pro, Ser, Thr, or Val). The polypeptide is Methionine aminopeptidase 2 (Encephalitozoon cuniculi (strain GB-M1) (Microsporidian parasite)).